The chain runs to 284 residues: Phosphatidylglycerol--prolipoprotein diacylglyceryl transferase (284 aa).

Helical transmembrane passes span 19 to 39, 60 to 80, 98 to 118, 130 to 150, 199 to 219, 225 to 245, and 258 to 278; these read ISFYWYGMMYVLSFIFAMWFL, LLYLNFLGVVIGGRIGYVLFY, GGMSFHGGLIGVIISIMWFSY, FIVPAVPVGLGLGRLGNFING, QLYEMILEGIVLFVVIYIFSC, GSISGLFLLLYGLFRIIIEFF, and FITLGQVLSFPMVIFGFIIMY. R143 provides a ligand contact to a 1,2-diacyl-sn-glycero-3-phospho-(1'-sn-glycerol).

It belongs to the Lgt family.

It is found in the cell inner membrane. The enzyme catalyses L-cysteinyl-[prolipoprotein] + a 1,2-diacyl-sn-glycero-3-phospho-(1'-sn-glycerol) = an S-1,2-diacyl-sn-glyceryl-L-cysteinyl-[prolipoprotein] + sn-glycerol 1-phosphate + H(+). The protein operates within protein modification; lipoprotein biosynthesis (diacylglyceryl transfer). Its function is as follows. Catalyzes the transfer of the diacylglyceryl group from phosphatidylglycerol to the sulfhydryl group of the N-terminal cysteine of a prolipoprotein, the first step in the formation of mature lipoproteins. This Blochmanniella floridana protein is Phosphatidylglycerol--prolipoprotein diacylglyceryl transferase.